Reading from the N-terminus, the 214-residue chain is Coiled-coil domain-containing protein 169 (214 aa).

Residues Glu-30–Lys-144 are a coiled coil. The disordered stretch occupies residues Val-161–His-214. The segment covering Ala-165–Ala-182 has biased composition (basic and acidic residues). Positions Ala-191–Gly-202 are enriched in basic residues.

Belongs to the CCDC169 family.

This chain is Coiled-coil domain-containing protein 169 (ccdc169), found in Xenopus laevis (African clawed frog).